We begin with the raw amino-acid sequence, 204 residues long: Holliday junction branch migration complex subunit RuvA (204 aa).

Residues 1-64 are domain I; the sequence is MIAQLKGSLA…EDAFLLYGFH (64 aa). The segment at 65–143 is domain II; the sequence is SESQRKVFNL…ALPMAAPTTA (79 aa). The tract at residues 144-154 is flexible linker; sequence IGAATMAANPA. A domain III region spans residues 154-204; it reads AGLREEVASALLNLGYKPPQVDAALAKLFSAGEITDISVALKGALKLLAPA.

It belongs to the RuvA family. Homotetramer. Forms an RuvA(8)-RuvB(12)-Holliday junction (HJ) complex. HJ DNA is sandwiched between 2 RuvA tetramers; dsDNA enters through RuvA and exits via RuvB. An RuvB hexamer assembles on each DNA strand where it exits the tetramer. Each RuvB hexamer is contacted by two RuvA subunits (via domain III) on 2 adjacent RuvB subunits; this complex drives branch migration. In the full resolvosome a probable DNA-RuvA(4)-RuvB(12)-RuvC(2) complex forms which resolves the HJ.

The protein localises to the cytoplasm. Functionally, the RuvA-RuvB-RuvC complex processes Holliday junction (HJ) DNA during genetic recombination and DNA repair, while the RuvA-RuvB complex plays an important role in the rescue of blocked DNA replication forks via replication fork reversal (RFR). RuvA specifically binds to HJ cruciform DNA, conferring on it an open structure. The RuvB hexamer acts as an ATP-dependent pump, pulling dsDNA into and through the RuvAB complex. HJ branch migration allows RuvC to scan DNA until it finds its consensus sequence, where it cleaves and resolves the cruciform DNA. This chain is Holliday junction branch migration complex subunit RuvA, found in Magnetococcus marinus (strain ATCC BAA-1437 / JCM 17883 / MC-1).